Reading from the N-terminus, the 113-residue chain is Ribosome-binding factor A (113 aa).

This sequence belongs to the RbfA family. In terms of assembly, monomer. Binds 30S ribosomal subunits, but not 50S ribosomal subunits or 70S ribosomes.

It is found in the cytoplasm. One of several proteins that assist in the late maturation steps of the functional core of the 30S ribosomal subunit. Associates with free 30S ribosomal subunits (but not with 30S subunits that are part of 70S ribosomes or polysomes). Required for efficient processing of 16S rRNA. May interact with the 5'-terminal helix region of 16S rRNA. This Mycoplasmopsis agalactiae (strain NCTC 10123 / CIP 59.7 / PG2) (Mycoplasma agalactiae) protein is Ribosome-binding factor A.